The primary structure comprises 622 residues: Cilia- and flagella-associated protein 206 (622 aa).

The tract at residues 571–592 (QVYPPKDTSTQSMREDSTGVPR) is disordered.

The protein belongs to the CFAP206 family.

It is found in the cytoplasm. It localises to the cytoskeleton. The protein resides in the cilium axoneme. Its subcellular location is the cilium basal body. Functionally, essential for sperm motility and is involved in the regulation of the beating frequency of motile cilia on the epithelial cells of the respiratory tract. Required for the establishment of radial spokes in sperm flagella. This chain is Cilia- and flagella-associated protein 206, found in Macaca fascicularis (Crab-eating macaque).